Here is a 215-residue protein sequence, read N- to C-terminus: Probable phosphoglycerate mutase GpmB (215 aa).

Residues 8–15 (RHGETQWN), 21–22 (QG), Arg58, 82–85 (ELDM), 104–105 (RR), and 151–152 (GI) each bind substrate. The active-site Tele-phosphohistidine intermediate is the His9. The active-site Proton donor/acceptor is the Glu82.

This sequence belongs to the phosphoglycerate mutase family. GpmB subfamily.

The catalysed reaction is (2R)-2-phosphoglycerate = (2R)-3-phosphoglycerate. It participates in carbohydrate degradation; glycolysis; pyruvate from D-glyceraldehyde 3-phosphate: step 3/5. In Enterobacter sp. (strain 638), this protein is Probable phosphoglycerate mutase GpmB.